The primary structure comprises 593 residues: Methionine--tRNA ligase (593 aa).

Residues proline 7 to histidine 17 carry the 'HIGH' region motif. Zn(2+) contacts are provided by cysteine 139, cysteine 142, cysteine 152, and cysteine 155. The short motif at lysine 343 to serine 347 is the 'KMSKS' region element. Threonine 346 serves as a coordination point for ATP.

The protein belongs to the class-I aminoacyl-tRNA synthetase family. MetG type 1 subfamily. As to quaternary structure, monomer. Zn(2+) is required as a cofactor.

The protein localises to the cytoplasm. It carries out the reaction tRNA(Met) + L-methionine + ATP = L-methionyl-tRNA(Met) + AMP + diphosphate. In terms of biological role, is required not only for elongation of protein synthesis but also for the initiation of all mRNA translation through initiator tRNA(fMet) aminoacylation. In Saccharopolyspora erythraea (strain ATCC 11635 / DSM 40517 / JCM 4748 / NBRC 13426 / NCIMB 8594 / NRRL 2338), this protein is Methionine--tRNA ligase.